The sequence spans 638 residues: Chaperone protein HtpG (638 aa).

The interval 1–346 (MSQQETHGFQ…SNDLPLNVSR (346 aa)) is a; substrate-binding. The segment at 347 to 563 (EILQDNKVTT…EGEMSTQMIK (217 aa)) is b. The interval 564 to 638 (LMEAAGQAVP…MNEMLLAKLK (75 aa)) is c.

It belongs to the heat shock protein 90 family. Homodimer.

It is found in the cytoplasm. Functionally, molecular chaperone. Has ATPase activity. The chain is Chaperone protein HtpG from Shewanella sediminis (strain HAW-EB3).